The primary structure comprises 314 residues: Methionyl-tRNA formyltransferase (314 aa).

A (6S)-5,6,7,8-tetrahydrofolate-binding site is contributed by 110–113 (SLLP).

Belongs to the Fmt family.

The catalysed reaction is L-methionyl-tRNA(fMet) + (6R)-10-formyltetrahydrofolate = N-formyl-L-methionyl-tRNA(fMet) + (6S)-5,6,7,8-tetrahydrofolate + H(+). Attaches a formyl group to the free amino group of methionyl-tRNA(fMet). The formyl group appears to play a dual role in the initiator identity of N-formylmethionyl-tRNA by promoting its recognition by IF2 and preventing the misappropriation of this tRNA by the elongation apparatus. This chain is Methionyl-tRNA formyltransferase, found in Lactobacillus gasseri (strain ATCC 33323 / DSM 20243 / BCRC 14619 / CIP 102991 / JCM 1131 / KCTC 3163 / NCIMB 11718 / NCTC 13722 / AM63).